We begin with the raw amino-acid sequence, 351 residues long: MVPMDRLLQIVRRFEFLEARLSAGAAPAEIAALSREYAELKPVVAEISAYRTALEDLAEAEAMLSDPEMRALAEDEIPALRARIPGMEQALRLALLPKDAADARPAILEIRPGTGGEEAALFAGDLLRMYQRYAEGQGWRFELLDLAPSELGGIREATARVEGEGAFARLKYESGVHRVQRVPETEAQGRIHTSAATVAVLPEAEEVDLEIPAADIRIDTMRSSGAGGQHVNTTDSAVRITHLPTGIIVTSSEKSQHRNREIAMQVLRARLYDLERQRLADARSADRKAQVGSGDRSERIRTYNFPQGRMTDHRINLTLYALPQIMAGDLSEVISALTAHDQAARLAEMEA.

Q229 carries the post-translational modification N5-methylglutamine.

This sequence belongs to the prokaryotic/mitochondrial release factor family. Post-translationally, methylated by PrmC. Methylation increases the termination efficiency of RF1.

Its subcellular location is the cytoplasm. Peptide chain release factor 1 directs the termination of translation in response to the peptide chain termination codons UAG and UAA. This chain is Peptide chain release factor 1, found in Cereibacter sphaeroides (strain ATCC 17029 / ATH 2.4.9) (Rhodobacter sphaeroides).